The primary structure comprises 506 residues: Cytochrome P450 94B3 (506 aa).

Residues 2–22 (AFLLSFLILAFLITIIFFLSS) traverse the membrane as a helical segment. Cys-447 is a binding site for heme.

Belongs to the cytochrome P450 family. Requires heme as cofactor.

It is found in the membrane. The protein resides in the endoplasmic reticulum membrane. It catalyses the reaction a jasmonyl-L-amino acid + reduced [NADPH--hemoprotein reductase] + O2 = a 12-hydroxyjasmonyl-L-alpha-amino acid + oxidized [NADPH--hemoprotein reductase] + H2O + H(+). The enzyme catalyses L-isoleucine-(+)-7-isojasmonate + NADPH + O2 + H(+) = L-isoleucine-(+)-12-hydroxy-7-isojasmonate + NADP(+) + H2O. It carries out the reaction a jasmonyl-L-isoleucinate + NADPH + O2 + H(+) = L-isoleucine-12-hydroxyjasmonate + NADP(+) + H2O. In terms of biological role, hydroxylase involved in the oxidation of the plant hormone jasmonoyl-L-isoleucine (JA-Ile), a bioactive phytohormone of the jasmonate-mediated signaling pathway. Converts JA-Ile to 12-hydroxy-JA-Ile. Exerts negative feedback control on JA-Ile levels and plays a key role in attenuation of jasmonate responses. Negatively regulates the expression of wound-induced genes TIFY11A/JAZ5, TIFY5A/JAZ8 and TIFY5A/JAZ10. Catalyzes the hydroxylation of jasmonoyl-L-valine (JA-Val), jasmonoyl-L-leucine (JA-Leu) and jasmonoyl-L-phenylalanine (JA-Phe) in vitro. Converts JA-Val, JA-Leu and JA-Phe to 12-hydroxy-JA-Val, 12-hydroxy-JA-Leu and 12-hydroxy-JA-Phe, respectively. The sequence is that of Cytochrome P450 94B3 from Arabidopsis thaliana (Mouse-ear cress).